A 271-amino-acid chain; its full sequence is Beta-lysine N(6)-acetyltransferase (271 aa).

The segment at 86–122 is disordered; it reads LRKDRGTGKNQKKKKISRKKDNWKKRKEKSRLPEGYT. Basic residues predominate over residues 95 to 114; that stretch reads NQKKKKISRKKDNWKKRKEK. In terms of domain architecture, N-acetyltransferase spans 121–269; it reads YTLRPAVQAD…GFEDMNIWCR (149 aa).

It belongs to the acetyltransferase family.

It carries out the reaction (3S)-3,6-diaminohexanoate + acetyl-CoA = (3S)-6-acetamido-3-aminohexanoate + CoA + H(+). Catalyzes the acetylation of beta-lysine to N6-acetyl-beta-lysine, a compatible solute produced by methanogenic archaea that helps cells to cope with salt stress. The chain is Beta-lysine N(6)-acetyltransferase from Methanosarcina mazei (strain ATCC BAA-159 / DSM 3647 / Goe1 / Go1 / JCM 11833 / OCM 88) (Methanosarcina frisia).